Here is a 525-residue protein sequence, read N- to C-terminus: Coronin-2A (525 aa).

WD repeat units follow at residues 80–120 (GHRG…LTKN), 130–170 (GHAR…SVIM), 178–217 (CHQD…VLQE), 220–263 (YKGH…VPVT), and 269–308 (GSSG…PHLN). Residues 485–524 (QMFYRQQDEIRRLRELVTQREVQAKQLELEIRNLRMNSPR) adopt a coiled-coil conformation.

This sequence belongs to the WD repeat coronin family. As to quaternary structure, binds actin. Component of the N-Cor repressor complex, at least composed of NCOR1, NCOR2, HDAC3, TBL1X, TBL1R, CORO2A and GPS2.

This Bos taurus (Bovine) protein is Coronin-2A (CORO2A).